A 151-amino-acid polypeptide reads, in one-letter code: 3-hydroxyacyl-[acyl-carrier-protein] dehydratase FabZ (151 aa).

H56 is a catalytic residue.

This sequence belongs to the thioester dehydratase family. FabZ subfamily.

Its subcellular location is the cytoplasm. The catalysed reaction is a (3R)-hydroxyacyl-[ACP] = a (2E)-enoyl-[ACP] + H2O. Its function is as follows. Involved in unsaturated fatty acids biosynthesis. Catalyzes the dehydration of short chain beta-hydroxyacyl-ACPs and long chain saturated and unsaturated beta-hydroxyacyl-ACPs. The polypeptide is 3-hydroxyacyl-[acyl-carrier-protein] dehydratase FabZ (Rhodopseudomonas palustris (strain HaA2)).